A 145-amino-acid chain; its full sequence is Flagellar assembly factor FliW (145 aa).

This sequence belongs to the FliW family. Interacts with translational regulator CsrA and flagellin(s).

Its subcellular location is the cytoplasm. Functionally, acts as an anti-CsrA protein, binds CsrA and prevents it from repressing translation of its target genes, one of which is flagellin. Binds to flagellin and participates in the assembly of the flagellum. The sequence is that of Flagellar assembly factor FliW from Clostridium kluyveri (strain NBRC 12016).